The following is a 291-amino-acid chain: Bifunctional protein FolD (291 aa).

Residues G167–S169 and S192 contribute to the NADP(+) site.

It belongs to the tetrahydrofolate dehydrogenase/cyclohydrolase family. Homodimer.

It catalyses the reaction (6R)-5,10-methylene-5,6,7,8-tetrahydrofolate + NADP(+) = (6R)-5,10-methenyltetrahydrofolate + NADPH. The catalysed reaction is (6R)-5,10-methenyltetrahydrofolate + H2O = (6R)-10-formyltetrahydrofolate + H(+). It participates in one-carbon metabolism; tetrahydrofolate interconversion. Functionally, catalyzes the oxidation of 5,10-methylenetetrahydrofolate to 5,10-methenyltetrahydrofolate and then the hydrolysis of 5,10-methenyltetrahydrofolate to 10-formyltetrahydrofolate. In Leptospira biflexa serovar Patoc (strain Patoc 1 / Ames), this protein is Bifunctional protein FolD.